The chain runs to 155 residues: Arginine repressor (155 aa).

This sequence belongs to the ArgR family.

It localises to the cytoplasm. It participates in amino-acid biosynthesis; L-arginine biosynthesis [regulation]. Functionally, regulates arginine biosynthesis genes. This Mannheimia succiniciproducens (strain KCTC 0769BP / MBEL55E) protein is Arginine repressor.